Consider the following 147-residue polypeptide: Small ribosomal subunit protein bS18 (147 aa).

Belongs to the bacterial ribosomal protein bS18 family. In terms of assembly, part of the 30S ribosomal subunit. Forms a tight heterodimer with protein bS6.

In terms of biological role, binds as a heterodimer with protein bS6 to the central domain of the 16S rRNA, where it helps stabilize the platform of the 30S subunit. The sequence is that of Small ribosomal subunit protein bS18 from Dehalococcoides mccartyi (strain ATCC BAA-2100 / JCM 16839 / KCTC 5957 / BAV1).